A 458-amino-acid chain; its full sequence is Adenylosuccinate synthetase (458 aa).

GTP is bound by residues 17 to 23 (GDEGKGK) and 45 to 47 (GHT). The Proton acceptor role is filled by D18. Mg(2+) contacts are provided by D18 and G45. Residues 18 to 21 (DEGK), 43 to 46 (NAGH), T137, R151, Q247, T262, and R330 each bind IMP. The Proton donor role is filled by H46. 326 to 332 (VTTGRSR) is a substrate binding site. Residues R332, 358 to 360 (KLD), and 440 to 442 (STS) each bind GTP.

The protein belongs to the adenylosuccinate synthetase family. As to quaternary structure, homodimer. It depends on Mg(2+) as a cofactor.

It localises to the cytoplasm. The enzyme catalyses IMP + L-aspartate + GTP = N(6)-(1,2-dicarboxyethyl)-AMP + GDP + phosphate + 2 H(+). It participates in purine metabolism; AMP biosynthesis via de novo pathway; AMP from IMP: step 1/2. In terms of biological role, plays an important role in the de novo pathway of purine nucleotide biosynthesis. Catalyzes the first committed step in the biosynthesis of AMP from IMP. The polypeptide is Adenylosuccinate synthetase (Acidovorax ebreus (strain TPSY) (Diaphorobacter sp. (strain TPSY))).